Reading from the N-terminus, the 409-residue chain is MSSARLLESQTSDEDNEDIERRPHQSHSRSCSNNTTPTHPPHPMVRKGGVARRICLIGGALFLLLVALCYLTLSGDTRLGGSEDSEEGSHHGLDSMNFRPLNETVHICSESYEDRRQFMQDKPQSDYVQLPVIYFVTPTYPRREQIPELTRLAHTLLHIPRLHWLVADDQEKCNDYMDTLLYRFGMPFTHMVSPMPSKFRNEKPAPRGVANRRAALQWIRQHNLTNGILYFGDDDNTYDLRLFSEIRKTQRVSMFPVGLIADYGVSGPVVRKGKVVAFLDSWVAGRRWPVDMAGFAVNLEYMAQYPYVNMPYKPGYEEDLFLRSIGLQMNLIEPRGNNCTEILVWHTQTKSKKLGMVRLESKYLDDRSNLGALLHNLKLMGVTSTTESEGRNALISKNGRENPHSKILS.

A disordered region spans residues 1 to 45 (MSSARLLESQTSDEDNEDIERRPHQSHSRSCSNNTTPTHPPHPMV). Over 1–53 (MSSARLLESQTSDEDNEDIERRPHQSHSRSCSNNTTPTHPPHPMVRKGGVARR) the chain is Cytoplasmic. Serine 9 bears the Phosphoserine mark. Position 11 is a phosphothreonine (threonine 11). Phosphoserine is present on residues serine 12 and serine 32. The chain crosses the membrane as a helical; Signal-anchor for type II membrane protein span at residues 54-73 (ICLIGGALFLLLVALCYLTL). Residues 74 to 409 (SGDTRLGGSE…RENPHSKILS (336 aa)) are Lumenal-facing. N-linked (GlcNAc...) asparagine glycans are attached at residues asparagine 102 and asparagine 223. Aspartate 235 serves as a coordination point for Mn(2+). Glutamate 318 acts as the Proton acceptor in catalysis. Residue asparagine 338 is glycosylated (N-linked (GlcNAc...) asparagine). The interval 389–409 (EGRNALISKNGRENPHSKILS) is disordered. Residues 398–409 (NGRENPHSKILS) show a composition bias toward basic and acidic residues.

This sequence belongs to the glycosyltransferase 43 family. It depends on Mn(2+) as a cofactor.

The protein localises to the golgi apparatus membrane. It catalyses the reaction 3-O-(beta-D-galactosyl-(1-&gt;3)-beta-D-galactosyl-(1-&gt;4)-beta-D-xylosyl)-L-seryl-[protein] + UDP-alpha-D-glucuronate = 3-O-(beta-D-GlcA-(1-&gt;3)-beta-D-Gal-(1-&gt;3)-beta-D-Gal-(1-&gt;4)-beta-D-Xyl)-L-seryl-[protein] + UDP + H(+). Its pathway is protein modification; protein glycosylation. Its function is as follows. Involved in the biosynthesis of L2/HNK-1 carbohydrate epitope on both glycolipids and glycoproteins. Enzyme has a broad specificity. The sequence is that of Galactosylgalactosylxylosylprotein 3-beta-glucuronosyltransferase S (GlcAT-S) from Drosophila melanogaster (Fruit fly).